The following is a 356-amino-acid chain: Phospho-N-acetylmuramoyl-pentapeptide-transferase (356 aa).

A run of 10 helical transmembrane segments spans residues 27-47, 73-93, 97-117, 138-158, 165-185, 195-215, 232-252, 258-278, 284-304, and 333-353; these read ATLM…INML, TMGG…WMDL, FVWA…LDDL, FLVA…WLYV, AIPL…GAGN, GLAI…AYLA, AGEL…FLWF, AVFM…AIAV, IVLA…IIQV, and KVVI…LATL.

This sequence belongs to the glycosyltransferase 4 family. MraY subfamily. Mg(2+) is required as a cofactor.

It localises to the cell inner membrane. It carries out the reaction UDP-N-acetyl-alpha-D-muramoyl-L-alanyl-gamma-D-glutamyl-meso-2,6-diaminopimeloyl-D-alanyl-D-alanine + di-trans,octa-cis-undecaprenyl phosphate = di-trans,octa-cis-undecaprenyl diphospho-N-acetyl-alpha-D-muramoyl-L-alanyl-D-glutamyl-meso-2,6-diaminopimeloyl-D-alanyl-D-alanine + UMP. It participates in cell wall biogenesis; peptidoglycan biosynthesis. Functionally, catalyzes the initial step of the lipid cycle reactions in the biosynthesis of the cell wall peptidoglycan: transfers peptidoglycan precursor phospho-MurNAc-pentapeptide from UDP-MurNAc-pentapeptide onto the lipid carrier undecaprenyl phosphate, yielding undecaprenyl-pyrophosphoryl-MurNAc-pentapeptide, known as lipid I. In Erythrobacter litoralis (strain HTCC2594), this protein is Phospho-N-acetylmuramoyl-pentapeptide-transferase.